The following is a 729-amino-acid chain: Fatty acid oxidation complex subunit alpha (729 aa).

The segment at 1 to 189 (MLYKGDTLYL…KIGLVDGVVK (189 aa)) is enoyl-CoA hydratase/isomerase. Substrate is bound at residue Asp-296. The interval 311 to 729 (ETPKQAAVLG…ARPVGDLKTA (419 aa)) is 3-hydroxyacyl-CoA dehydrogenase. NAD(+) contacts are provided by residues Met-324, Asp-343, 400 to 402 (VVE), Lys-407, and Ser-429. His-450 acts as the For 3-hydroxyacyl-CoA dehydrogenase activity in catalysis. Asn-453 lines the NAD(+) pocket. Substrate contacts are provided by Asn-500 and Tyr-660. Residues 708–729 (RHNEPYYPPVEPARPVGDLKTA) form a disordered region.

It in the N-terminal section; belongs to the enoyl-CoA hydratase/isomerase family. In the C-terminal section; belongs to the 3-hydroxyacyl-CoA dehydrogenase family. As to quaternary structure, heterotetramer of two alpha chains (FadB) and two beta chains (FadA).

The enzyme catalyses a (3S)-3-hydroxyacyl-CoA + NAD(+) = a 3-oxoacyl-CoA + NADH + H(+). The catalysed reaction is a (3S)-3-hydroxyacyl-CoA = a (2E)-enoyl-CoA + H2O. It catalyses the reaction a 4-saturated-(3S)-3-hydroxyacyl-CoA = a (3E)-enoyl-CoA + H2O. It carries out the reaction (3S)-3-hydroxybutanoyl-CoA = (3R)-3-hydroxybutanoyl-CoA. The enzyme catalyses a (3Z)-enoyl-CoA = a 4-saturated (2E)-enoyl-CoA. The catalysed reaction is a (3E)-enoyl-CoA = a 4-saturated (2E)-enoyl-CoA. It functions in the pathway lipid metabolism; fatty acid beta-oxidation. In terms of biological role, involved in the aerobic and anaerobic degradation of long-chain fatty acids via beta-oxidation cycle. Catalyzes the formation of 3-oxoacyl-CoA from enoyl-CoA via L-3-hydroxyacyl-CoA. It can also use D-3-hydroxyacyl-CoA and cis-3-enoyl-CoA as substrate. The protein is Fatty acid oxidation complex subunit alpha of Escherichia coli O81 (strain ED1a).